The chain runs to 468 residues: MRISQLEGKAVALWGWGREGRAAYRALRARLPTQALTVFCNAEEAREIGALADAALQVETDASAQALGRFEIVVKSPGISPYRAEALAAAAQGTHFIGGTALWFAEHAQADGSVPGVVCITGTKGKSTTTALLAHVLRAAGHRTALVGNIGQPLLEVLAPQPPPAYWAVELSSYQTGDVGRSGARPQLALVLNLFPEHLDWHGDEARYVRDKLSLVTEGRPRIALLNAADPLLAGLQLPDSQVRWFNQPAGWHLRGEVVYRGEQAIFDTADVPLPGEHNRRNLCAVLAAVEALGLDAAALAPAAASFRPLPNRLQLLGSVDGISYVNDSISTTPHASLAALACFARRRVALLVGGHDRGLDWHDFAQQMAQQAPLEIVTMGANGPRIHALLAPLAEAGHFGLHAANDLEHAMGLARNALGEQGGVVLLSPGAPSFGAYSDYVARGRHFAQLAGFDPAAISAIDGLGVH.

122-128 (GTKGKST) provides a ligand contact to ATP.

Belongs to the MurCDEF family. MurD2 subfamily.

Its subcellular location is the cytoplasm. It catalyses the reaction UDP-N-acetyl-alpha-D-muramoyl-L-alanine + L-glutamate + ATP = UDP-N-acetyl-alpha-D-muramoyl-L-alanyl-L-glutamate + ADP + phosphate + H(+). The protein operates within cell wall biogenesis; peptidoglycan biosynthesis. Cell wall formation. Catalyzes the addition of L-glutamate to the nucleotide precursor UDP-N-acetylmuramoyl-L-alanine. The polypeptide is UDP-N-acetylmuramoyl-L-alanine--L-glutamate ligase (Xanthomonas axonopodis pv. citri (strain 306)).